A 66-amino-acid polypeptide reads, in one-letter code: U-scoloptoxin(04)-Ssd2a (66 aa).

An N-terminal signal peptide occupies residues 1 to 19 (MKAIYILSVLLLMMLPILS).

This sequence belongs to the scoloptoxin-04 family. Post-translationally, contains 2 disulfide bonds. In terms of tissue distribution, expressed by the venom gland.

The protein localises to the secreted. The polypeptide is U-scoloptoxin(04)-Ssd2a (Scolopendra dehaani (Thai centipede)).